Consider the following 325-residue polypeptide: Aldo-keto reductase family 1 member A1 (325 aa).

Alanine 2 carries the post-translational modification N-acetylalanine. Position 4 is a phosphoserine (serine 4). NADP(+) contacts are provided by residues 11-20, threonine 21, and tryptophan 22; that span reads GQKMPLIGLG. Residue serine 38 is modified to Phosphoserine. Aspartate 45 is a binding site for NADP(+). The active-site Proton donor is the tyrosine 50. Lysine 127 carries the N6-acetyllysine; alternate modification. N6-succinyllysine; alternate is present on lysine 127. Lysine 145 is modified (N6-succinyllysine). Serine 162, asparagine 163, serine 211, leucine 213, serine 215, serine 216, lysine 263, serine 264, isoleucine 265, threonine 266, arginine 269, glutamine 272, and asparagine 273 together coordinate NADP(+). Serine 211 is subject to Phosphoserine.

This sequence belongs to the aldo/keto reductase family. In terms of assembly, monomer. Widely expressed. Highly expressed in kidney, salivary gland and liver. Detected in trachea, stomach, brain, lung, prostate, placenta, mammary gland, small intestine and lung.

It localises to the cytoplasm. Its subcellular location is the cytosol. It is found in the apical cell membrane. The enzyme catalyses a primary alcohol + NADP(+) = an aldehyde + NADPH + H(+). The catalysed reaction is allyl alcohol + NADP(+) = acrolein + NADPH + H(+). It catalyses the reaction glycerol + NADP(+) = D-glyceraldehyde + NADPH + H(+). It carries out the reaction glycerol + NADP(+) = L-glyceraldehyde + NADPH + H(+). The enzyme catalyses hydroxyacetone + NADP(+) = methylglyoxal + NADPH + H(+). The catalysed reaction is a 4-hydroxynonen-1-ol + NADP(+) = a 4-hydroxynonenal + NADPH + H(+). It catalyses the reaction 3-deoxyfructose + NADP(+) = 3-deoxyglucosone + NADPH + H(+). It carries out the reaction L-gulonate + NADP(+) = aldehydo-D-glucuronate + NADPH + H(+). The enzyme catalyses L-gulono-1,4-lactone + NADP(+) = D-glucurono-3,6-lactone + NADPH + H(+). The catalysed reaction is pyridine 3-methanol + NADP(+) = pyridine-3-carbaldehyde + NADPH + H(+). It catalyses the reaction S-nitroso-CoA + NADPH + H(+) = sulfinamide-CoA + NADP(+). It carries out the reaction S-nitrosoglutathione + NADPH + H(+) = S-(hydroxysulfenamide)glutathione + NADP(+). Its function is as follows. Catalyzes the NADPH-dependent reduction of a wide variety of carbonyl-containing compounds to their corresponding alcohols. Displays enzymatic activity towards endogenous metabolites such as aromatic and aliphatic aldehydes, ketones, monosaccharides and bile acids, with a preference for negatively charged substrates, such as glucuronate and succinic semialdehyde. Functions as a detoxifiying enzyme by reducing a range of toxic aldehydes. Reduces methylglyoxal and 3-deoxyglucosone, which are present at elevated levels under hyperglycemic conditions and are cytotoxic. Involved also in the detoxification of lipid-derived aldehydes like acrolein. Plays a role in the activation of procarcinogens, such as polycyclic aromatic hydrocarbon trans-dihydrodiols, and in the metabolism of various xenobiotics and drugs, including the anthracyclines doxorubicin (DOX) and daunorubicin (DAUN). Also acts as an inhibitor of protein S-nitrosylation by mediating degradation of S-nitroso-coenzyme A (S-nitroso-CoA), a cofactor required to S-nitrosylate proteins. S-nitroso-CoA reductase activity is involved in reprogramming intermediary metabolism in renal proximal tubules, notably by inhibiting protein S-nitrosylation of isoform 2 of PKM (PKM2). Also acts as a S-nitroso-glutathione reductase by catalyzing the NADPH-dependent reduction of S-nitrosoglutathione. Displays no reductase activity towards retinoids. This Homo sapiens (Human) protein is Aldo-keto reductase family 1 member A1 (AKR1A1).